The following is a 298-amino-acid chain: Thymidylate synthase (298 aa).

Residues arginine 25 and 159–160 each bind dUMP; that span reads RR. Residue cysteine 179 is the Nucleophile of the active site. DUMP is bound by residues 200–203, asparagine 211, and 241–243; these read RSVD and HLY. Residue aspartate 203 coordinates (6R)-5,10-methylene-5,6,7,8-tetrahydrofolate. Alanine 297 contributes to the (6R)-5,10-methylene-5,6,7,8-tetrahydrofolate binding site.

Belongs to the thymidylate synthase family. Bacterial-type ThyA subfamily. Homodimer.

It localises to the cytoplasm. It catalyses the reaction dUMP + (6R)-5,10-methylene-5,6,7,8-tetrahydrofolate = 7,8-dihydrofolate + dTMP. Its pathway is pyrimidine metabolism; dTTP biosynthesis. Catalyzes the reductive methylation of 2'-deoxyuridine-5'-monophosphate (dUMP) to 2'-deoxythymidine-5'-monophosphate (dTMP) while utilizing 5,10-methylenetetrahydrofolate (mTHF) as the methyl donor and reductant in the reaction, yielding dihydrofolate (DHF) as a by-product. This enzymatic reaction provides an intracellular de novo source of dTMP, an essential precursor for DNA biosynthesis. The chain is Thymidylate synthase from Cereibacter sphaeroides (strain ATCC 17029 / ATH 2.4.9) (Rhodobacter sphaeroides).